Here is a 75-residue protein sequence, read N- to C-terminus: RNA-binding protein KhpA (75 aa).

The KH domain maps to 29 to 75 (KVVYHLTVHPDDVGKVIGKNGRIAKAIRTVVYASKTDGNKRIYLDIM).

It belongs to the KhpA RNA-binding protein family. In terms of assembly, forms a complex with KhpB.

It is found in the cytoplasm. Functionally, a probable RNA chaperone. Forms a complex with KhpB which binds to cellular RNA and controls its expression. Plays a role in peptidoglycan (PG) homeostasis and cell length regulation. In Oceanobacillus iheyensis (strain DSM 14371 / CIP 107618 / JCM 11309 / KCTC 3954 / HTE831), this protein is RNA-binding protein KhpA.